The sequence spans 152 residues: uncharacterized protein (152 aa).

Helical transmembrane passes span 2–22 (ENLIVAISNFPAVLPIGLSFL), 26–46 (FITFGTITFVSIASFISHLIE), 92–112 (VVPIVNNKWLFAMTIPVFILL), and 128–148 (YIITHCMWHAGIFGLMYYFLK).

It is found in the membrane. This is an uncharacterized protein from Acanthamoeba polyphaga mimivirus (APMV).